We begin with the raw amino-acid sequence, 532 residues long: Phosphoenolpyruvate carboxylase (532 aa).

The protein belongs to the PEPCase type 2 family. As to quaternary structure, homotetramer. Requires Mg(2+) as cofactor.

It catalyses the reaction oxaloacetate + phosphate = phosphoenolpyruvate + hydrogencarbonate. Functionally, catalyzes the irreversible beta-carboxylation of phosphoenolpyruvate (PEP) to form oxaloacetate (OAA), a four-carbon dicarboxylic acid source for the tricarboxylic acid cycle. In Methanopyrus kandleri (strain AV19 / DSM 6324 / JCM 9639 / NBRC 100938), this protein is Phosphoenolpyruvate carboxylase.